Here is a 594-residue protein sequence, read N- to C-terminus: Spindle pole body-associated protein CIK1 (594 aa).

The segment at 1–29 (MNNSKIPKLSFHSDPNNVTRDFPKTKRQK) is disordered. Residues 81–360 (IERVKNNERK…VNELEKVQQE (280 aa)) adopt a coiled-coil conformation.

In terms of assembly, interacts with KAR3; the interaction is direct.

It localises to the nucleus. The protein localises to the cytoplasm. It is found in the cytoskeleton. Its subcellular location is the microtubule organizing center. The protein resides in the spindle pole body. It localises to the spindle. Its function is as follows. Together with the minus end-directed microtubule motor KAR3, involved in spindle midzone assembly, karyogamy (nuclear fusion) during mating, and with an essential function in meiosis I. To contribute to spindle midzone assembly during mitotic metaphase, the KAR3-CIK1 motor cross-links anti-parallel microtubules to align them on the spindle axis; as the motor travels polewards splayed microtubules are pulled into alignment. During the karyogamy (nuclear fusion) step of mating, KAR3-CIK1 cross-links antiparallel cytoplasmic microtubules emanating from the spindle pole bodies of mating partners; the motor activity of KAR3 creates the force that pulls the nuclei together by sliding cross-linked microtubules past one another. KAR3-CIK1 promotes microtubule shortening predominantly from the microtubule plus-end. Required for interhomolog recombination, synapsis of homologous chromosomes and establishment of a meiosis I spindle. The sequence is that of Spindle pole body-associated protein CIK1 (CIK1) from Saccharomyces cerevisiae (strain ATCC 204508 / S288c) (Baker's yeast).